Consider the following 130-residue polypeptide: Methylglyoxal synthase (130 aa).

Residues 1–130 form the MGS-like domain; the sequence is MSTPRIALIA…DLARRLTANA (130 aa). Substrate is bound by residues His-11, Lys-15, 37–40, and 57–58; these read TGTT and SG. Residue Asp-63 is the Proton donor/acceptor of the active site. His-90 is a substrate binding site.

It belongs to the methylglyoxal synthase family.

The enzyme catalyses dihydroxyacetone phosphate = methylglyoxal + phosphate. Functionally, catalyzes the formation of methylglyoxal from dihydroxyacetone phosphate. The sequence is that of Methylglyoxal synthase from Burkholderia mallei (strain NCTC 10247).